We begin with the raw amino-acid sequence, 629 residues long: tRNA uridine 5-carboxymethylaminomethyl modification enzyme MnmG (629 aa).

13-18 is an FAD binding site; it reads GGGHAG. Position 273-287 (273-287) interacts with NAD(+); sequence GPRYCPSIEDKIHRF.

This sequence belongs to the MnmG family. Homodimer. Heterotetramer of two MnmE and two MnmG subunits. The cofactor is FAD.

The protein resides in the cytoplasm. NAD-binding protein involved in the addition of a carboxymethylaminomethyl (cmnm) group at the wobble position (U34) of certain tRNAs, forming tRNA-cmnm(5)s(2)U34. The protein is tRNA uridine 5-carboxymethylaminomethyl modification enzyme MnmG of Shewanella baltica (strain OS195).